The primary structure comprises 113 residues: Transcriptional regulator RamA (113 aa).

An HTH araC/xylS-type domain is found at 9–107 (DTIVEWIDDN…NQPPGAYRKE (99 aa)). 2 DNA-binding regions (H-T-H motif) span residues 26 to 47 (DDIA…LQYK) and 74 to 97 (VYDI…TRTF).

Monomer. Interacts with the C-terminus of RNAP subunit RpoA when part of class I or class II promoter complexes. Also interacts with sigma-70/RpoD in class II promoter complexes.

In terms of biological role, transcriptional regulator. Binds to regulatory regions of target genes, including its own gene, efflux pump operon acrAB, antisense RNA gene micF, and various genes involved in lipid A biosynthesis, including lpxO and lpxL-2. Regulates expression of many genes, perhaps including its own; activates various lipid A biosynthetic genes, and as a result of activating acrAB, confers multidrug resistance. Plays a role in virulence and survival in host cells. In Klebsiella pneumoniae subsp. pneumoniae (strain HS11286), this protein is Transcriptional regulator RamA.